The sequence spans 175 residues: Disulfide bond formation protein B (175 aa).

Residues 1-13 lie on the Cytoplasmic side of the membrane; it reads MVSNWLDAAPRRV. The chain crosses the membrane as a helical span at residues 14 to 30; sequence LALISAACIAMLAFGMY. Residues 31 to 48 are Periplasmic-facing; that stretch reads LQHVVGLEPCPMCIVQRY. A disulfide bond links C40 and C43. Residues 49 to 65 form a helical membrane-spanning segment; that stretch reads ALIGVAVFTGLGSLRGG. At 66–70 the chain is on the cytoplasmic side; the sequence is RGWWM. The chain crosses the membrane as a helical span at residues 71 to 88; that stretch reads TWGVLALLLSGFGAFVAA. The Periplasmic portion of the chain corresponds to 89-144; sequence RQSWLQWYPPEIATCGRDFYGMIENFPISRAIPMIFRGSGDCAAIDWTFLGGSIAN. C103 and C130 form a disulfide bridge. The chain crosses the membrane as a helical span at residues 145–163; it reads WSFVCFVVMALVLLVMLLR. Residues 164-175 are Cytoplasmic-facing; it reads APRPARGGFSAA.

Belongs to the DsbB family.

The protein localises to the cell inner membrane. Required for disulfide bond formation in some periplasmic proteins. Acts by oxidizing the DsbA protein. The protein is Disulfide bond formation protein B of Paracidovorax citrulli (strain AAC00-1) (Acidovorax citrulli).